The sequence spans 237 residues: Segregation and condensation protein A (237 aa).

This sequence belongs to the ScpA family. In terms of assembly, component of a cohesin-like complex composed of ScpA, ScpB and the Smc homodimer, in which ScpA and ScpB bind to the head domain of Smc. The presence of the three proteins is required for the association of the complex with DNA.

The protein resides in the cytoplasm. Its function is as follows. Participates in chromosomal partition during cell division. May act via the formation of a condensin-like complex containing Smc and ScpB that pull DNA away from mid-cell into both cell halves. The chain is Segregation and condensation protein A from Streptococcus thermophilus (strain ATCC BAA-250 / LMG 18311).